We begin with the raw amino-acid sequence, 242 residues long: Glucosamine-6-phosphate deaminase (242 aa).

The Proton acceptor; for enolization step role is filled by D67. N136 functions as the For ring-opening step in the catalytic mechanism. The active-site Proton acceptor; for ring-opening step is the H138. E143 (for ring-opening step) is an active-site residue.

This sequence belongs to the glucosamine/galactosamine-6-phosphate isomerase family. NagB subfamily.

The catalysed reaction is alpha-D-glucosamine 6-phosphate + H2O = beta-D-fructose 6-phosphate + NH4(+). It functions in the pathway amino-sugar metabolism; N-acetylneuraminate degradation; D-fructose 6-phosphate from N-acetylneuraminate: step 5/5. Functionally, catalyzes the reversible isomerization-deamination of glucosamine 6-phosphate (GlcN6P) to form fructose 6-phosphate (Fru6P) and ammonium ion. In Clostridium perfringens (strain 13 / Type A), this protein is Glucosamine-6-phosphate deaminase.